Reading from the N-terminus, the 648-residue chain is ATP-dependent zinc metalloprotease FtsH 4 (648 aa).

The Cytoplasmic portion of the chain corresponds to 1–6 (MKQSHK). Residues 7–27 (TLLLWVLLIMMFLAIWQFLSP) traverse the membrane as a helical segment. The Periplasmic portion of the chain corresponds to 28-111 (DSRPATQVAF…VFFEKEDTSP (84 aa)). The helical transmembrane segment at 112-132 (FWPGAIMYLLPTVFLLVMFYL) threads the bilayer. Residues 133–648 (FMRQLQAGGG…FGTPKPAPST (516 aa)) lie on the Cytoplasmic side of the membrane. An ATP-binding site is contributed by 205–212 (GPPGTGKT). His-427 is a binding site for Zn(2+). Glu-428 is an active-site residue. Positions 431 and 504 each coordinate Zn(2+). The disordered stretch occupies residues 622-648 (YSDRDRAAKEKRRAASIFGTPKPAPST).

This sequence in the central section; belongs to the AAA ATPase family. In the C-terminal section; belongs to the peptidase M41 family. Homohexamer. Requires Zn(2+) as cofactor.

It localises to the cell inner membrane. Functionally, acts as a processive, ATP-dependent zinc metallopeptidase for both cytoplasmic and membrane proteins. Plays a role in the quality control of integral membrane proteins. This is ATP-dependent zinc metalloprotease FtsH 4 from Sorangium cellulosum (strain So ce56) (Polyangium cellulosum (strain So ce56)).